Consider the following 470-residue polypeptide: Mucin-like protein 3 (470 aa).

Positions 1-29 (MAQMTSGLYPMFGFFICLLFLPASWEAGA) are cleaved as a signal peptide. Over 30 to 401 (NTFQELQKTG…EGSNSFPAWA (372 aa)) the chain is Extracellular. 2 disordered regions span residues 57-234 (RALS…HTIP) and 248-318 (TKEA…KAPE). The segment covering 75 to 87 (STATQKPKRQCNT) has biased composition (polar residues). An N-linked (GlcNAc...) asparagine glycan is attached at N122. Residues 132-152 (ARNERSADDHGSTNSEKRSDG) are compositionally biased toward basic and acidic residues. Residues 169–193 (TRTSGTPVSSTETSTKLRTTSQKPE) show a composition bias toward polar residues. The segment covering 194 to 203 (TSSHDSDLIR) has biased composition (basic and acidic residues). The span at 204 to 222 (KSTSLPVKSTEVSRTSYRT) shows a compositional bias: polar residues. A compositionally biased stretch (basic and acidic residues) spans 260–273 (KYERETRSASERIS). The span at 283–295 (HTPSAGETTTQVS) shows a compositional bias: polar residues. N-linked (GlcNAc...) asparagine glycosylation is present at N325. Residues 402–422 (IVVVILMAVIILLIFLGLIFL) traverse the membrane as a helical segment. Over 423–470 (VSCASRARHQLTQNSEDAEPEDKGGRNSYPVYLMEQQNLNLNQISSPP) the chain is Cytoplasmic.

It is found in the cell membrane. Its subcellular location is the cytoplasm. May modulate NF-kappaB signaling and play a role in cell growth. This chain is Mucin-like protein 3, found in Rattus norvegicus (Rat).